Reading from the N-terminus, the 250-residue chain is Diphthine synthase (250 aa).

S-adenosyl-L-methionine is bound by residues leucine 9, aspartate 85, valine 88, 113-114, leucine 165, alanine 202, and histidine 227; that span reads SI.

It belongs to the diphthine synthase family. Homodimer.

It catalyses the reaction 2-[(3S)-amino-3-carboxypropyl]-L-histidyl-[translation elongation factor 2] + 3 S-adenosyl-L-methionine = diphthine-[translation elongation factor 2] + 3 S-adenosyl-L-homocysteine + 3 H(+). Its pathway is protein modification; peptidyl-diphthamide biosynthesis. S-adenosyl-L-methionine-dependent methyltransferase that catalyzes the trimethylation of the amino group of the modified target histidine residue in translation elongation factor 2 (EF-2), to form an intermediate called diphthine. The three successive methylation reactions represent the second step of diphthamide biosynthesis. The protein is Diphthine synthase of Methanoregula boonei (strain DSM 21154 / JCM 14090 / 6A8).